We begin with the raw amino-acid sequence, 210 residues long: Proteasome subunit beta (210 aa).

A propeptide spans 1–7 (MEVLKTG) (removed in mature form; by autocatalysis). Thr8 acts as the Nucleophile in catalysis.

It belongs to the peptidase T1B family. The 20S proteasome core is composed of 14 alpha and 14 beta subunits that assemble into four stacked heptameric rings, resulting in a barrel-shaped structure. The two inner rings, each composed of seven catalytic beta subunits, are sandwiched by two outer rings, each composed of seven alpha subunits. The catalytic chamber with the active sites is on the inside of the barrel. Has a gated structure, the ends of the cylinder being occluded by the N-termini of the alpha-subunits. Is capped at one or both ends by the proteasome regulatory ATPase, PAN.

Its subcellular location is the cytoplasm. The enzyme catalyses Cleavage of peptide bonds with very broad specificity.. With respect to regulation, the formation of the proteasomal ATPase PAN-20S proteasome complex, via the docking of the C-termini of PAN into the intersubunit pockets in the alpha-rings, triggers opening of the gate for substrate entry. Interconversion between the open-gate and close-gate conformations leads to a dynamic regulation of the 20S proteasome proteolysis activity. In terms of biological role, component of the proteasome core, a large protease complex with broad specificity involved in protein degradation. The chain is Proteasome subunit beta from Picrophilus torridus (strain ATCC 700027 / DSM 9790 / JCM 10055 / NBRC 100828 / KAW 2/3).